We begin with the raw amino-acid sequence, 1729 residues long: 182 kDa tankyrase-1-binding protein (1729 aa).

The span at 1 to 12 shows a compositional bias: polar residues; sequence MKVSTLRESSAM. Residues 1–151 are disordered; it reads MKVSTLRESS…VRKAPAPFRP (151 aa). Ser14 is modified (phosphoserine). Over residues 46-63 the composition is skewed to low complexity; sequence ALPAKPALPAKPSLLVPV. A compositionally biased stretch (basic and acidic residues) spans 117–127; the sequence is TGKEEAGKEEP. Position 131 is a phosphothreonine (Thr131). Ser178, Ser221, and Ser228 each carry phosphoserine. 3 disordered regions span residues 184–450, 484–603, and 657–880; these read GSRL…LAAL, PSGL…ESPL, and ETTQ…SSRD. An acidic region spans residues 210–1572; the sequence is DEDGSTLFRG…TEILDSAMYR (1363 aa). A compositionally biased stretch (basic and acidic residues) spans 230-245; that stretch reads AECREEHSKTPEERSL. Phosphothreonine is present on Thr239. Phosphoserine occurs at positions 287 and 301. Positions 352–363 are enriched in low complexity; sequence PSPGLPAEGAPE. Residues 364 to 374 are compositionally biased toward pro residues; sequence APRPSSPPPEV. 5 positions are modified to phosphoserine: Ser429, Ser435, Ser437, Ser494, and Ser498. 3 stretches are compositionally biased toward low complexity: residues 500 to 512, 524 to 541, and 572 to 583; these read ITEASEAAEAAEA, VSQQGQGAGSAPSGSGSS, and LPTTEGTPGLPL. Thr501 is modified (phosphothreonine). Phosphoserine is present on residues Ser601, Ser672, Ser691, Ser695, Ser712, Ser724, Ser744, Ser762, and Ser806. Residues 738-753 are compositionally biased toward polar residues; it reads PQPSSFSPSSWCQGAS. The segment covering 803-812 has biased composition (polar residues); it reads ASSSQDQSKV. Phosphothreonine is present on Thr833. 6 positions are modified to phosphoserine: Ser836, Ser851, Ser872, Ser877, Ser882, and Ser893. A compositionally biased stretch (basic and acidic residues) spans 858-872; the sequence is RDAELQDQEFGKRDS. Tyr897 carries the phosphotyrosine modification. A disordered region spans residues 897-1083; the sequence is YASQDANEQG…ADLEDGEMGK (187 aa). 4 positions are modified to phosphoserine: Ser899, Ser920, Ser936, and Ser976. Residue Thr979 is modified to Phosphothreonine. Phosphoserine is present on residues Ser983, Ser987, Ser1004, Ser1008, Ser1013, Ser1024, Ser1029, Ser1054, Ser1073, Ser1091, Ser1103, Ser1133, Ser1138, Ser1158, Ser1178, Ser1248, and Ser1253. Residues 1012–1021 are compositionally biased toward basic and acidic residues; it reads GSRDAGRPGE. Polar residues predominate over residues 1043-1054; it reads RDQSSWQNSDAS. The tract at residues 1240–1302 is disordered; that stretch reads EVGEGGGHSQ…GAVCSPGESK (63 aa). Position 1282 is a phosphothreonine (Thr1282). Ser1297, Ser1328, Ser1331, Ser1383, and Ser1385 each carry phosphoserine. The interval 1362 to 1561 is disordered; sequence AREHGVGGVS…SPSQDFSFIE (200 aa). The span at 1389–1400 shows a compositional bias: basic and acidic residues; that stretch reads EARDPLEARELG. Polar residues predominate over residues 1406 to 1419; sequence GPETQGEDYSSSSL. Ser1435, Ser1439, Ser1450, Ser1452, Ser1473, Ser1476, Ser1503, and Ser1506 each carry phosphoserine. The tankyrase-binding stretch occupies residues 1450-1542; it reads SGSQGLLEEM…SDQGPAQTSR (93 aa). Thr1518 is subject to Phosphothreonine. Phosphoserine is present on residues Ser1533, Ser1545, and Ser1558. Thr1563 is modified (phosphothreonine). Residues 1575 to 1729 are disordered; it reads ANLGRKRGHR…QALKLKKKKV (155 aa). Over residues 1577–1586 the composition is skewed to basic residues; sequence LGRKRGHRAP. Basic and acidic residues predominate over residues 1602 to 1615; that stretch reads SDAHLFQDSTEPRA. Phosphoserine occurs at positions 1620, 1621, and 1631. The Nuclear localization signal motif lies at 1629-1635; sequence PQSRRTR. N6-methyllysine is present on Lys1644. Residues Ser1652, Ser1666, and Ser1715 each carry the phosphoserine modification. Residues 1665-1679 are compositionally biased toward basic and acidic residues; sequence RSAEEGELAESKSSQ. The short motif at 1723-1729 is the Nuclear localization signal element; sequence KLKKKKV.

Binds to the ANK repeat domain of TNKS1 and TNKS2. In terms of processing, ADP-ribosylated by TNKS1 (in vitro). As to expression, detected in testis, ovary, lung, skeletal muscle, heart, prostate and pancreas, and at very low levels in brain and peripheral blood leukocytes.

It localises to the nucleus. The protein localises to the cytoplasm. The protein resides in the cytoskeleton. It is found in the chromosome. The polypeptide is 182 kDa tankyrase-1-binding protein (TNKS1BP1) (Homo sapiens (Human)).